Reading from the N-terminus, the 235-residue chain is Uridylate kinase (235 aa).

9 to 12 (KLSG) lines the ATP pocket. A UMP-binding site is contributed by glycine 51. Glycine 52 and arginine 56 together coordinate ATP. Residues aspartate 71 and 132-139 (TGNPYFTT) each bind UMP. ATP is bound by residues threonine 159, tyrosine 165, and aspartate 168.

The protein belongs to the UMP kinase family. In terms of assembly, homohexamer.

It localises to the cytoplasm. It carries out the reaction UMP + ATP = UDP + ADP. It functions in the pathway pyrimidine metabolism; CTP biosynthesis via de novo pathway; UDP from UMP (UMPK route): step 1/1. Inhibited by UTP. Functionally, catalyzes the reversible phosphorylation of UMP to UDP. This chain is Uridylate kinase, found in Christiangramia forsetii (strain DSM 17595 / CGMCC 1.15422 / KT0803) (Gramella forsetii).